A 554-amino-acid polypeptide reads, in one-letter code: Arginine--tRNA ligase (554 aa).

The 'HIGH' region signature appears at 129–139 (ANPTGPLHIGH).

It belongs to the class-I aminoacyl-tRNA synthetase family. As to quaternary structure, monomer.

The protein resides in the cytoplasm. It catalyses the reaction tRNA(Arg) + L-arginine + ATP = L-arginyl-tRNA(Arg) + AMP + diphosphate. In Citrifermentans bemidjiense (strain ATCC BAA-1014 / DSM 16622 / JCM 12645 / Bem) (Geobacter bemidjiensis), this protein is Arginine--tRNA ligase.